We begin with the raw amino-acid sequence, 247 residues long: Carboxy-S-adenosyl-L-methionine synthase (247 aa).

Residues Y40, 65–67 (GAS), 90–91 (DN), 122–123 (DI), N137, and R204 each bind S-adenosyl-L-methionine.

It belongs to the class I-like SAM-binding methyltransferase superfamily. Cx-SAM synthase family. In terms of assembly, homodimer.

It carries out the reaction prephenate + S-adenosyl-L-methionine = carboxy-S-adenosyl-L-methionine + 3-phenylpyruvate + H2O. Its function is as follows. Catalyzes the conversion of S-adenosyl-L-methionine (SAM) to carboxy-S-adenosyl-L-methionine (Cx-SAM). The sequence is that of Carboxy-S-adenosyl-L-methionine synthase from Pseudomonas putida (strain ATCC 700007 / DSM 6899 / JCM 31910 / BCRC 17059 / LMG 24140 / F1).